Reading from the N-terminus, the 112-residue chain is MFKILLVCALVALVAANENPEVKELVNDVQADGFVSKLVLDNGSAASATGDVHGNIDGVFEWVSPEGEHVRVSYKADENGYQPQSDLLPTPPPIPEAILKAIAYIQAHPSKE.

The signal sequence occupies residues 1 to 16 (MFKILLVCALVALVAA). The region spanning 31–92 (ADGFVSKLVL…PQSDLLPTPP (62 aa)) is the Chitin-binding type R&amp;R domain.

Component of the larval cuticle. The protein is Larval cuticle protein 4 (Lcp4) of Drosophila melanogaster (Fruit fly).